The sequence spans 352 residues: Nicotinate-nucleotide--dimethylbenzimidazole phosphoribosyltransferase (352 aa).

The active-site Proton acceptor is glutamate 318.

Belongs to the CobT family.

The catalysed reaction is 5,6-dimethylbenzimidazole + nicotinate beta-D-ribonucleotide = alpha-ribazole 5'-phosphate + nicotinate + H(+). It participates in nucleoside biosynthesis; alpha-ribazole biosynthesis; alpha-ribazole from 5,6-dimethylbenzimidazole: step 1/2. In terms of biological role, catalyzes the synthesis of alpha-ribazole-5'-phosphate from nicotinate mononucleotide (NAMN) and 5,6-dimethylbenzimidazole (DMB). The sequence is that of Nicotinate-nucleotide--dimethylbenzimidazole phosphoribosyltransferase from Dehalococcoides mccartyi (strain CBDB1).